We begin with the raw amino-acid sequence, 348 residues long: MARLLIAASGTGGHVFPALGVAEKLSDYEIQWLGTPNRLEQSLVGDRYPFHTISVEGFQTRSPIKKLKILLGLLSSIFEVKQLIEQQKIDVVFTTGGYIASSAILAAKLSGIPAILHESNYIPGKVTKLLSRFCTTVALGFEGTKQYLPTTPTIWVSTPVRSQFYTSQPLDLNIPNDVPLIVIIGGSQGAVSVNQLVRQCVPYWLEMGAYVVHLTGKNDPNANSLQDPQYITLPFYDNMAGLLQRADLAVSRAGSGTLTELAITKTPAILIPYPFAAEDHQSFNAQVFVDAGAAYCYQQKELTDKILTDLVSDLLNHPDKLKEMSNKSSELAVMDSSEKLAKLIRDSI.

UDP-N-acetyl-alpha-D-glucosamine contacts are provided by residues 11-13 (TGG), Asn120, Arg161, Ser187, and Gln281.

Belongs to the glycosyltransferase 28 family. MurG subfamily.

It is found in the cell inner membrane. The catalysed reaction is di-trans,octa-cis-undecaprenyl diphospho-N-acetyl-alpha-D-muramoyl-L-alanyl-D-glutamyl-meso-2,6-diaminopimeloyl-D-alanyl-D-alanine + UDP-N-acetyl-alpha-D-glucosamine = di-trans,octa-cis-undecaprenyl diphospho-[N-acetyl-alpha-D-glucosaminyl-(1-&gt;4)]-N-acetyl-alpha-D-muramoyl-L-alanyl-D-glutamyl-meso-2,6-diaminopimeloyl-D-alanyl-D-alanine + UDP + H(+). The protein operates within cell wall biogenesis; peptidoglycan biosynthesis. Cell wall formation. Catalyzes the transfer of a GlcNAc subunit on undecaprenyl-pyrophosphoryl-MurNAc-pentapeptide (lipid intermediate I) to form undecaprenyl-pyrophosphoryl-MurNAc-(pentapeptide)GlcNAc (lipid intermediate II). This Crocosphaera subtropica (strain ATCC 51142 / BH68) (Cyanothece sp. (strain ATCC 51142)) protein is UDP-N-acetylglucosamine--N-acetylmuramyl-(pentapeptide) pyrophosphoryl-undecaprenol N-acetylglucosamine transferase.